We begin with the raw amino-acid sequence, 291 residues long: Bifunctional protein FolD (291 aa).

NADP(+)-binding positions include 171-173 (GVS) and Ile239.

This sequence belongs to the tetrahydrofolate dehydrogenase/cyclohydrolase family. In terms of assembly, homodimer.

It carries out the reaction (6R)-5,10-methylene-5,6,7,8-tetrahydrofolate + NADP(+) = (6R)-5,10-methenyltetrahydrofolate + NADPH. The enzyme catalyses (6R)-5,10-methenyltetrahydrofolate + H2O = (6R)-10-formyltetrahydrofolate + H(+). The protein operates within one-carbon metabolism; tetrahydrofolate interconversion. Functionally, catalyzes the oxidation of 5,10-methylenetetrahydrofolate to 5,10-methenyltetrahydrofolate and then the hydrolysis of 5,10-methenyltetrahydrofolate to 10-formyltetrahydrofolate. The sequence is that of Bifunctional protein FolD from Xylella fastidiosa (strain Temecula1 / ATCC 700964).